The following is a 203-amino-acid chain: Ribosomal RNA small subunit methyltransferase G (203 aa).

S-adenosyl-L-methionine contacts are provided by residues Gly73, Leu78, 124-125, and Arg138; that span reads VE.

Belongs to the methyltransferase superfamily. RNA methyltransferase RsmG family.

Its subcellular location is the cytoplasm. The enzyme catalyses guanosine(527) in 16S rRNA + S-adenosyl-L-methionine = N(7)-methylguanosine(527) in 16S rRNA + S-adenosyl-L-homocysteine. Functionally, specifically methylates the N7 position of guanine in position 527 of 16S rRNA. The protein is Ribosomal RNA small subunit methyltransferase G of Haemophilus ducreyi (strain 35000HP / ATCC 700724).